The sequence spans 96 residues: Co-chaperonin GroES (96 aa).

This sequence belongs to the GroES chaperonin family. In terms of assembly, heptamer of 7 subunits arranged in a ring. Interacts with the chaperonin GroEL.

It localises to the cytoplasm. Together with the chaperonin GroEL, plays an essential role in assisting protein folding. The GroEL-GroES system forms a nano-cage that allows encapsulation of the non-native substrate proteins and provides a physical environment optimized to promote and accelerate protein folding. GroES binds to the apical surface of the GroEL ring, thereby capping the opening of the GroEL channel. The polypeptide is Co-chaperonin GroES (Thiobacillus denitrificans (strain ATCC 25259 / T1)).